Reading from the N-terminus, the 284-residue chain is uncharacterized protein (284 aa).

Residues 1-24 form the signal peptide; it reads MLYSRESRTTVLFLALVTSLTVLC. Topologically, residues 25-84 are cytoplasmic; the sequence is HSVDVTTVFTTSTITEITTVTAAPQPQNKAETALNTATNIIQTMQFLFNCAPFKWKGPLK. Residues 85–104 traverse the membrane as a helical segment; sequence ITSCALNFIVLLLTAWGYLL. Residues 105–284 are Extracellular-facing; sequence KYLQENKLNS…SVHMYSSSLL (180 aa). The N-linked (GlcNAc...) asparagine glycan is linked to N270.

The protein to yeast YNL019c.

It localises to the cell membrane. This is an uncharacterized protein from Saccharomyces cerevisiae (strain ATCC 204508 / S288c) (Baker's yeast).